The chain runs to 37 residues: Cytochrome b6-f complex subunit 5 (37 aa).

Residues leucine 5 to alanine 25 traverse the membrane as a helical segment.

The protein belongs to the PetG family. In terms of assembly, the 4 large subunits of the cytochrome b6-f complex are cytochrome b6, subunit IV (17 kDa polypeptide, PetD), cytochrome f and the Rieske protein, while the 4 small subunits are PetG, PetL, PetM and PetN. The complex functions as a dimer.

The protein resides in the plastid. Its subcellular location is the chloroplast thylakoid membrane. Component of the cytochrome b6-f complex, which mediates electron transfer between photosystem II (PSII) and photosystem I (PSI), cyclic electron flow around PSI, and state transitions. PetG is required for either the stability or assembly of the cytochrome b6-f complex. This Cryptomeria japonica (Japanese cedar) protein is Cytochrome b6-f complex subunit 5.